A 35-amino-acid polypeptide reads, in one-letter code: Conotoxin Cal6.1d (35 aa).

A propeptide spanning residues Gly-1 to Arg-8 is cleaved from the precursor. 3 cysteine pairs are disulfide-bonded: Cys-9-Cys-25, Cys-16-Cys-29, and Cys-24-Cys-34.

The protein belongs to the conotoxin O1 superfamily. Expressed by the venom duct.

It localises to the secreted. Its function is as follows. Probable neurotoxin with unknown target. Possibly targets ion channels. The chain is Conotoxin Cal6.1d from Californiconus californicus (California cone).